A 587-amino-acid polypeptide reads, in one-letter code: DELLA protein GAIP-B (587 aa).

Positions Met-1 to Gly-23 are disordered. The DELLA motif motif lies at Asp-46–Ala-50. A GRAS domain is found at Val-209–Lys-577. Residues Ile-216–Ile-270 form a leucine repeat I (LRI) region. The VHIID stretch occupies residues Gln-288–Gly-353. The VHIID motif lies at Val-319–Asp-323. Residues Asp-367–Ser-399 are leucine repeat II (LRII). The PFYRE stretch occupies residues Val-411–Asn-498. The LXXLL motif motif lies at Leu-419 to Leu-423. Residues Ala-501–Lys-577 form an SAW region.

The protein belongs to the GRAS family. DELLA subfamily. Post-translationally, phosphorylated. Ubiquitinated. Upon GA application it is ubiquitinated, leading to its subsequent degradation.

The protein resides in the nucleus. Functionally, probable transcriptional regulator that acts as a repressor of the gibberellin (GA) signaling pathway. Probably acts by participating in large multiprotein complexes that represses transcription of GA-inducible genes. Upon GA application, it is degraded by the proteasome, allowing the GA signaling pathway. The chain is DELLA protein GAIP-B (GAIPB) from Cucurbita maxima (Pumpkin).